The following is a 244-amino-acid chain: Putative outer membrane protein RC0105 (244 aa).

The first 23 residues, Met-1–Ala-23, serve as a signal peptide directing secretion.

It belongs to the OmpW/AlkL family.

It is found in the cell outer membrane. This is Putative outer membrane protein RC0105 from Rickettsia conorii (strain ATCC VR-613 / Malish 7).